The chain runs to 237 residues: Cysteine-rich venom protein DIS3 (237 aa).

Positions 1 to 18 (MFVFILLSLAAVLQQSFG) are cleaved as a signal peptide. The SCP domain maps to 37-165 (VDKHNAFRRS…SYDYFYVCQY (129 aa)). 7 disulfide bridges follow: cysteine 74–cysteine 152, cysteine 91–cysteine 166, cysteine 147–cysteine 163, cysteine 185–cysteine 192, cysteine 188–cysteine 197, cysteine 201–cysteine 234, and cysteine 219–cysteine 232. The ShKT domain occupies 201 to 234 (CSREDVFTNCKSLVAKSNCQDDYIRKNCLATCFC).

Belongs to the CRISP family. In terms of tissue distribution, expressed by the venom gland.

It localises to the secreted. Functionally, weakly blocks contraction of smooth muscle elicited by high potassium-induced depolarization, but does not block caffeine-stimulated contraction. May target voltage-gated calcium channels on smooth muscle. This chain is Cysteine-rich venom protein DIS3, found in Dispholidus typus (Boomslang).